Reading from the N-terminus, the 130-residue chain is Protein ApaG (130 aa).

In terms of domain architecture, ApaG spans R3–R127.

This chain is Protein ApaG, found in Mesorhizobium japonicum (strain LMG 29417 / CECT 9101 / MAFF 303099) (Mesorhizobium loti (strain MAFF 303099)).